We begin with the raw amino-acid sequence, 239 residues long: tRNA (guanine-N(7)-)-methyltransferase (239 aa).

Positions 69, 94, 121, and 144 each coordinate S-adenosyl-L-methionine. Aspartate 144 is a catalytic residue. Residues lysine 148, aspartate 180, and 217–220 (TKFE) each bind substrate.

It belongs to the class I-like SAM-binding methyltransferase superfamily. TrmB family.

The enzyme catalyses guanosine(46) in tRNA + S-adenosyl-L-methionine = N(7)-methylguanosine(46) in tRNA + S-adenosyl-L-homocysteine. It participates in tRNA modification; N(7)-methylguanine-tRNA biosynthesis. In terms of biological role, catalyzes the formation of N(7)-methylguanine at position 46 (m7G46) in tRNA. In Alcanivorax borkumensis (strain ATCC 700651 / DSM 11573 / NCIMB 13689 / SK2), this protein is tRNA (guanine-N(7)-)-methyltransferase.